The chain runs to 262 residues: Zinc import ATP-binding protein ZnuC (262 aa).

The ABC transporter domain maps to 6–221; sequence IRLDKVAVTL…PAFVELFGKN (216 aa). An ATP-binding site is contributed by 38–45; the sequence is GPNGAGKT.

This sequence belongs to the ABC transporter superfamily. Zinc importer (TC 3.A.1.15.5) family. The complex is composed of two ATP-binding proteins (ZnuC), two transmembrane proteins (ZnuB) and a solute-binding protein (ZnuA).

Its subcellular location is the cell inner membrane. The enzyme catalyses Zn(2+)(out) + ATP(in) + H2O(in) = Zn(2+)(in) + ADP(in) + phosphate(in) + H(+)(in). Part of the ABC transporter complex ZnuABC involved in zinc import. Responsible for energy coupling to the transport system. The polypeptide is Zinc import ATP-binding protein ZnuC (Pseudomonas syringae pv. syringae (strain B728a)).